We begin with the raw amino-acid sequence, 259 residues long: Proteasome subunit alpha (259 aa).

The protein belongs to the peptidase T1A family. As to quaternary structure, the 20S proteasome core is composed of 14 alpha and 14 beta subunits that assemble into four stacked heptameric rings, resulting in a barrel-shaped structure. The two inner rings, each composed of seven catalytic beta subunits, are sandwiched by two outer rings, each composed of seven alpha subunits. The catalytic chamber with the active sites is on the inside of the barrel. Has a gated structure, the ends of the cylinder being occluded by the N-termini of the alpha-subunits. Is capped at one or both ends by the proteasome regulatory ATPase, PAN.

The protein localises to the cytoplasm. The formation of the proteasomal ATPase PAN-20S proteasome complex, via the docking of the C-termini of PAN into the intersubunit pockets in the alpha-rings, triggers opening of the gate for substrate entry. Interconversion between the open-gate and close-gate conformations leads to a dynamic regulation of the 20S proteasome proteolysis activity. Functionally, component of the proteasome core, a large protease complex with broad specificity involved in protein degradation. In Methanococcus maripaludis (strain C5 / ATCC BAA-1333), this protein is Proteasome subunit alpha.